A 276-amino-acid chain; its full sequence is Urease accessory protein UreD (276 aa).

Belongs to the UreD family. As to quaternary structure, ureD, UreF and UreG form a complex that acts as a GTP-hydrolysis-dependent molecular chaperone, activating the urease apoprotein by helping to assemble the nickel containing metallocenter of UreC. The UreE protein probably delivers the nickel.

It localises to the cytoplasm. Its function is as follows. Required for maturation of urease via the functional incorporation of the urease nickel metallocenter. This is Urease accessory protein UreD from Paracidovorax citrulli (strain AAC00-1) (Acidovorax citrulli).